Here is a 126-residue protein sequence, read N- to C-terminus: Probable glycine cleavage system H protein (126 aa).

The 83-residue stretch at 24-106 folds into the Lipoyl-binding domain; that stretch reads VVRVGITDFA…FGDGWLLEVE (83 aa). An N6-lipoyllysine modification is found at Lys-65.

The protein belongs to the GcvH family. In terms of assembly, the glycine cleavage system is composed of four proteins: P, T, L and H. (R)-lipoate serves as cofactor.

The glycine cleavage system catalyzes the degradation of glycine. The H protein shuttles the methylamine group of glycine from the P protein to the T protein. The protein is Probable glycine cleavage system H protein of Natronomonas pharaonis (strain ATCC 35678 / DSM 2160 / CIP 103997 / JCM 8858 / NBRC 14720 / NCIMB 2260 / Gabara) (Halobacterium pharaonis).